We begin with the raw amino-acid sequence, 350 residues long: Blue-sensitive opsin (350 aa).

Over 1–36 the chain is Extracellular; that stretch reads MNGTEGPNFYVPMSNATGVVRSPFEYPQYYLAEPWA. Residues Asn-2 and Asn-15 are each glycosylated (N-linked (GlcNAc...) asparagine). A helical membrane pass occupies residues 37-61; sequence FSILAAYMFFLIITGFPINFLTLYV. Residues 62–73 are Cytoplasmic-facing; that stretch reads TIEHKKLRTPLN. Residues 74–98 form a helical membrane-spanning segment; sequence YILLNLAVADLFMVFGGFTTTMYTS. The Extracellular portion of the chain corresponds to 99–113; it reads MHGYFVFGETGCNLE. A disulfide bridge links Cys-110 with Cys-187. A helical transmembrane segment spans residues 114–133; sequence GYFATLGGEISLWSLVVLAI. Over 134-152 the chain is Cytoplasmic; the sequence is ERWVVVCKPISNFRFGENH. The helical transmembrane segment at 153–176 threads the bilayer; sequence AIMGLTLTWVMANACAMPPLFGWS. Over 177 to 202 the chain is Extracellular; that stretch reads RYIPEGLQCSCGIDYYTLKPEVNNES. N-linked (GlcNAc...) asparagine glycosylation occurs at Asn-200. Residues 203-230 form a helical membrane-spanning segment; the sequence is FVIYMFLVHFTIPLTIISFCYGRLVCAV. Over 231–252 the chain is Cytoplasmic; sequence KEAAAQQQESETTQRAEREVTR. Residues 253–276 traverse the membrane as a helical segment; it reads MVVIMVISFLVCWIPYASVAWYIF. Residues 277–284 are Extracellular-facing; the sequence is THQGSTFG. Residues 285 to 309 form a helical membrane-spanning segment; the sequence is PIFMTVPSFFAKSSSIYNPMIYICM. Lys-296 bears the N6-(retinylidene)lysine mark. Topologically, residues 310–350 are cytoplasmic; the sequence is NKQFRNCMITTLFCGKNPFEGEEEGSTTKTEASAVSSVSPA. The segment at 330 to 350 is disordered; the sequence is GEEEGSTTKTEASAVSSVSPA.

Belongs to the G-protein coupled receptor 1 family. Opsin subfamily. In terms of processing, phosphorylated on some or all of the serine and threonine residues present in the C-terminal region. As to expression, rod shaped photoreceptor cells which mediates vision in dim light.

It is found in the membrane. Its function is as follows. Visual pigments are the light-absorbing molecules that mediate vision. They consist of an apoprotein, opsin, covalently linked to cis-retinal. The protein is Blue-sensitive opsin of Conger conger (Conger eel).